The sequence spans 330 residues: Aspartate--ammonia ligase (330 aa).

The protein belongs to the class-II aminoacyl-tRNA synthetase family. AsnA subfamily.

The protein resides in the cytoplasm. The catalysed reaction is L-aspartate + NH4(+) + ATP = L-asparagine + AMP + diphosphate + H(+). Its pathway is amino-acid biosynthesis; L-asparagine biosynthesis; L-asparagine from L-aspartate (ammonia route): step 1/1. The sequence is that of Aspartate--ammonia ligase from Streptococcus pyogenes serotype M6 (strain ATCC BAA-946 / MGAS10394).